We begin with the raw amino-acid sequence, 723 residues long: Fatty acid oxidation complex subunit alpha (723 aa).

Residues 1-189 (MIYQAETLQV…KIGLLDAVVD (189 aa)) form an enoyl-CoA hydratase/isomerase region. Residue Asp-296 coordinates substrate. Positions 311 to 723 (SKDTQRAAVL…FYGAQQQGSI (413 aa)) are 3-hydroxyacyl-CoA dehydrogenase. Residues Met-325, Asp-344, 401–403 (VVE), Lys-408, and Ser-430 each bind NAD(+). The active-site For 3-hydroxyacyl-CoA dehydrogenase activity is His-451. Asn-454 contacts NAD(+). Substrate contacts are provided by Asn-501 and Tyr-661.

The protein in the N-terminal section; belongs to the enoyl-CoA hydratase/isomerase family. It in the C-terminal section; belongs to the 3-hydroxyacyl-CoA dehydrogenase family. In terms of assembly, heterotetramer of two alpha chains (FadB) and two beta chains (FadA).

It catalyses the reaction a (3S)-3-hydroxyacyl-CoA + NAD(+) = a 3-oxoacyl-CoA + NADH + H(+). It carries out the reaction a (3S)-3-hydroxyacyl-CoA = a (2E)-enoyl-CoA + H2O. The enzyme catalyses a 4-saturated-(3S)-3-hydroxyacyl-CoA = a (3E)-enoyl-CoA + H2O. The catalysed reaction is (3S)-3-hydroxybutanoyl-CoA = (3R)-3-hydroxybutanoyl-CoA. It catalyses the reaction a (3Z)-enoyl-CoA = a 4-saturated (2E)-enoyl-CoA. It carries out the reaction a (3E)-enoyl-CoA = a 4-saturated (2E)-enoyl-CoA. It participates in lipid metabolism; fatty acid beta-oxidation. Involved in the aerobic and anaerobic degradation of long-chain fatty acids via beta-oxidation cycle. Catalyzes the formation of 3-oxoacyl-CoA from enoyl-CoA via L-3-hydroxyacyl-CoA. It can also use D-3-hydroxyacyl-CoA and cis-3-enoyl-CoA as substrate. The chain is Fatty acid oxidation complex subunit alpha from Vibrio campbellii (strain ATCC BAA-1116).